The sequence spans 177 residues: Meiotically up-regulated gene 121 protein (177 aa).

The first 23 residues, 1 to 23 (MKGFVVISRFILTLFILITPGLA), serve as a signal peptide directing secretion. The N-linked (GlcNAc...) asparagine glycan is linked to N121.

The protein localises to the endoplasmic reticulum. Its subcellular location is the golgi apparatus. In terms of biological role, has a role in meiosis. The sequence is that of Meiotically up-regulated gene 121 protein (mug121) from Schizosaccharomyces pombe (strain 972 / ATCC 24843) (Fission yeast).